The following is a 487-amino-acid chain: uncharacterized protein (487 aa).

Disordered regions lie at residues 35-153 (VSRK…SGDQ), 237-345 (NTTK…AKAL), and 358-395 (QKRK…SSAA). The span at 54–96 (FDQEDILDTVPEQTDENEDEAGDDELESEKEELDYDEEEDDED) shows a compositional bias: acidic residues. Basic and acidic residues predominate over residues 97–132 (RRERTSRYTSEKKGSRKDSVEGDENKKENGQDETKR). The span at 241–253 (SKSRGRDTRKRRS) shows a compositional bias: basic residues. The span at 254–264 (SSYSSTSSSSD) shows a compositional bias: low complexity. Composition is skewed to basic and acidic residues over residues 273–338 (SRSD…KHSA) and 358–383 (QKRK…KKEV). A compositionally biased stretch (low complexity) spans 385 to 395 (TTVSTNTSSAA).

This is an uncharacterized protein from Caenorhabditis elegans.